A 78-amino-acid polypeptide reads, in one-letter code: Large ribosomal subunit protein bL28 (78 aa).

Positions 1-23 (MSRVCQVTGKKPMVGNNRSHAKN) are disordered.

It belongs to the bacterial ribosomal protein bL28 family.

The polypeptide is Large ribosomal subunit protein bL28 (Shewanella frigidimarina (strain NCIMB 400)).